We begin with the raw amino-acid sequence, 639 residues long: 1-deoxy-D-xylulose-5-phosphate synthase (639 aa).

Thiamine diphosphate-binding positions include H79 and 120 to 122 (AHS). A Mg(2+)-binding site is contributed by D151. Residues 152 to 153 (GA), N180, Y289, and E371 contribute to the thiamine diphosphate site. N180 contributes to the Mg(2+) binding site.

This sequence belongs to the transketolase family. DXPS subfamily. In terms of assembly, homodimer. Mg(2+) is required as a cofactor. It depends on thiamine diphosphate as a cofactor.

It catalyses the reaction D-glyceraldehyde 3-phosphate + pyruvate + H(+) = 1-deoxy-D-xylulose 5-phosphate + CO2. The protein operates within metabolic intermediate biosynthesis; 1-deoxy-D-xylulose 5-phosphate biosynthesis; 1-deoxy-D-xylulose 5-phosphate from D-glyceraldehyde 3-phosphate and pyruvate: step 1/1. In terms of biological role, catalyzes the acyloin condensation reaction between C atoms 2 and 3 of pyruvate and glyceraldehyde 3-phosphate to yield 1-deoxy-D-xylulose-5-phosphate (DXP). The sequence is that of 1-deoxy-D-xylulose-5-phosphate synthase from Rhizorhabdus wittichii (strain DSM 6014 / CCUG 31198 / JCM 15750 / NBRC 105917 / EY 4224 / RW1) (Sphingomonas wittichii).